Reading from the N-terminus, the 70-residue chain is MGSLWSKISQLFVDAFTEFLVSVVDIVIFLAILFGFTVAGWLLVFLLRVVCSALLRSRSAIHSPELSKVL.

Residue Gly2 is the site of N-myristoyl glycine; by host attachment. The tract at residues 2–15 (GSLWSKISQLFVDA) is endoplasmic reticulum retention signal. The Virion surface segment spans residues 2–25 (GSLWSKISQLFVDAFTEFLVSVVD). A helical membrane pass occupies residues 26-46 (IVIFLAILFGFTVAGWLLVFL). Over 47–70 (LRVVCSALLRSRSAIHSPELSKVL) the chain is Intravirion.

It belongs to the arteriviridae E protein family. Homooligomer. Associates with itself into higher-order structures, including dimers, trimers and tetramers. Associates with the GP2b-GP3-GP4 complex. In terms of processing, myristoylated. Not glycosylated.

It localises to the virion membrane. The protein localises to the host endoplasmic reticulum membrane. Its subcellular location is the host Golgi apparatus membrane. The protein resides in the secreted. Its function is as follows. Minor envelope protein. May function as a viroporin in the virion envelope that facilitates uncoating of the virus in order to release the genomic RNA into the cytoplasm for subsequent replication. This chain is Envelope small membrane protein (GP2b), found in Sus scrofa (Pig).